Reading from the N-terminus, the 469-residue chain is UDP-N-acetylmuramoylalanine--D-glutamate ligase (469 aa).

110–116 (GTNGKST) serves as a coordination point for ATP.

The protein belongs to the MurCDEF family.

It is found in the cytoplasm. The catalysed reaction is UDP-N-acetyl-alpha-D-muramoyl-L-alanine + D-glutamate + ATP = UDP-N-acetyl-alpha-D-muramoyl-L-alanyl-D-glutamate + ADP + phosphate + H(+). Its pathway is cell wall biogenesis; peptidoglycan biosynthesis. In terms of biological role, cell wall formation. Catalyzes the addition of glutamate to the nucleotide precursor UDP-N-acetylmuramoyl-L-alanine (UMA). This Synechococcus sp. (strain JA-3-3Ab) (Cyanobacteria bacterium Yellowstone A-Prime) protein is UDP-N-acetylmuramoylalanine--D-glutamate ligase.